The following is a 439-amino-acid chain: Prenyltransferase iacE (439 aa).

Substrate contacts are provided by residues 88 to 89 (WI), E97, R112, K198, Y200, R271, K273, and Y275.

Belongs to the tryptophan dimethylallyltransferase family.

The catalysed reaction is siccayne + dimethylallyl diphosphate = pestalodiol + diphosphate. It functions in the pathway secondary metabolite biosynthesis. Functionally, prenyltransferase; part of the gene cluster that mediates the biosynthesis of iso-A82775C, a enylepoxycyclohexane and biosynthetic precursor of the chloropestolide anticancer natural products. Within the cluster, the prenyltransferase iacE prenylates siccayne to generate pestalodiol E, using dimethylallyl diphosphate (DMAPP) as cosubstrate. The probable oxidoreductase iacF is then involved in the epoxidation of pestalodiol F to pestalodiol F, which is further converted to pestalofone A by the short-chain dehydrogenase/reductase iacG. Iso-A82775C is subsequently generated from pestalofone A by the short-chain dehydrogenase/reductase iacC. Iso-A82775C is further condensed with maldoxin via a Diels-Alder reaction to produce the anticancer natural products chloropestolides A to E. The chain is Prenyltransferase iacE from Pestalotiopsis fici (strain W106-1 / CGMCC3.15140).